The sequence spans 225 residues: PKHD-type hydroxylase YbiX (225 aa).

Positions 78 to 177 (TLSTPLFNRY…RVASFMWIQS (100 aa)) constitute a Fe2OG dioxygenase domain. Positions 96, 98, and 158 each coordinate Fe cation. Residue arginine 168 participates in 2-oxoglutarate binding.

The cofactor is Fe(2+). It depends on L-ascorbate as a cofactor.

The sequence is that of PKHD-type hydroxylase YbiX from Shigella boydii serotype 18 (strain CDC 3083-94 / BS512).